A 257-amino-acid chain; its full sequence is NH(3)-dependent NAD(+) synthetase (257 aa).

28-35 (GISGGVDS) is an ATP binding site. D34 is a binding site for Mg(2+). R109 contacts deamido-NAD(+). An ATP-binding site is contributed by T129. Mg(2+) is bound at residue E134. 2 residues coordinate deamido-NAD(+): K142 and D149. Residues K158 and S180 each contribute to the ATP site. 240 to 241 (HK) contributes to the deamido-NAD(+) binding site.

The protein belongs to the NAD synthetase family. As to quaternary structure, homodimer.

The catalysed reaction is deamido-NAD(+) + NH4(+) + ATP = AMP + diphosphate + NAD(+) + H(+). Its pathway is cofactor biosynthesis; NAD(+) biosynthesis; NAD(+) from deamido-NAD(+) (ammonia route): step 1/1. Catalyzes the ATP-dependent amidation of deamido-NAD to form NAD. Uses ammonia as a nitrogen source. In Pyrococcus furiosus (strain ATCC 43587 / DSM 3638 / JCM 8422 / Vc1), this protein is NH(3)-dependent NAD(+) synthetase.